Here is a 995-residue protein sequence, read N- to C-terminus: Putative pentatricopeptide repeat-containing protein At5g09950 (995 aa).

PPR repeat units follow at residues 35-65 (DVYLCNNLINAYLETGDSVSARKVFDEMPLR), 66-100 (NCVSWACIVSGYSRNGEHKEALVFLRDMVKEGIFS), 101-137 (NQYAFVSVLRACQEIGSVGILFGRQIHGLMFKLSYAV), 138-169 (DAVVSNVLISMYWKCIGSVGYALCAFGDIEVK), 170-204 (NSVSWNSIISVYSQAGDQRSAFRIFSSMQYDGSRP), 205-241 (TEYTFGSLVTTACSLTEPDVRLLEQIMCTIQKSGLLT), 242-276 (DLFVGSGLVSAFAKSGSLSYARKVFNQMETRNAVT), 278-303 (NGLMVGLVRQKWGEEATKLFMDMNSM), 307-342 (SPESYVILLSSFPEYSLAEEVGLKKGREVHGHVITT), 348-378 (MVGIGNGLVNMYAKCGSIADARRVFYFMTDK), 379-413 (DSVSWNSMITGLDQNGCFIEAVERYKSMRRHDILP), 414-448 (GSFTLISSLSSCASLKWAKLGQQIHGESLKLGIDL), 449-483 (NVSVSNALMTLYAETGYLNECRKIFSSMPEHDQVS), 484-515 (WNSIIGALARSERSLPEAVVCFLNAQRAGQKL), 516-550 (NRITFSSVLSAVSSLSFGELGKQIHGLALKNNIAD), 551-581 (EATTENALIACYGKCGEMDGCEKIFSRMAER), 583-617 (DNVTWNSMISGYIHNELLAKALDLVWFMLQTGQRL), 618-652 (DSFMYATVLSAFASVATLERGMEVHACSVRACLES), 653-683 (DVVVGSALVDMYSKCGRLDYALRFFNTMPVR), 684-718 (NSYSWNSMISGYARHGQGEEALKLFETMKLDGQTP), 720-750 (DHVTFVGVLSACSHAGLLEEGFKHFESMSDS), and 756-786 (RIEHFSCMADVLGRAGELDKLEDFIEKMPMK). The type E motif stretch occupies residues 791–868 (IWRTVLGACC…EAGYSWVTMK (78 aa)). Positions 869–899 (DGVHMFVAGDKSHPDADVIYKKLKELNRKMR) are type E(+) motif. The type DYW motif stretch occupies residues 900 to 995 (DAGYVPQTGF…DGACSCSDFW (96 aa)).

Belongs to the PPR family. PCMP-H subfamily.

This is Putative pentatricopeptide repeat-containing protein At5g09950 (PCMP-H35) from Arabidopsis thaliana (Mouse-ear cress).